Here is an 852-residue protein sequence, read N- to C-terminus: Alanine--tRNA ligase (852 aa).

4 residues coordinate Zn(2+): H554, H558, C656, and H660.

This sequence belongs to the class-II aminoacyl-tRNA synthetase family. It depends on Zn(2+) as a cofactor.

It is found in the cytoplasm. The catalysed reaction is tRNA(Ala) + L-alanine + ATP = L-alanyl-tRNA(Ala) + AMP + diphosphate. Catalyzes the attachment of alanine to tRNA(Ala) in a two-step reaction: alanine is first activated by ATP to form Ala-AMP and then transferred to the acceptor end of tRNA(Ala). Also edits incorrectly charged Ser-tRNA(Ala) and Gly-tRNA(Ala) via its editing domain. The sequence is that of Alanine--tRNA ligase from Campylobacter curvus (strain 525.92).